Consider the following 732-residue polypeptide: MPSAKSPRRKAPEPIDLDNPQYYFNRSLSWLEFNKRVLHEAYDPRTPLLERLKFMAIFSSNLDEFFMVRVAGLKQQVESGILQVGADGMPPAEQLQAVRQYLLPIVTEQHRYFDQELRALLAKESIFLTRFNELTPEQQAYLNDYFQAQVFPVLTPLAVDPAHPFPYISSLSLNLAVLIRDPESGQERLARVKVPNQFPRFVALPQHLHSPQGVHWLGVPLEEIIAHNLSALFPGMEIEAYFAFRITRSADLELETDKADDLLIAIEQEIRKRRFGSVVRLEVQRGIPPLLRQTLMEEMDLEEIDVYELEGLLCLNDLFAFMGLPLPQFKDPEWQPQVPPSFQRVEERESMFDTSSEITTLGTDYWEAVANELFSLIREGDIIVHHPYHSFAATVQRFITLAAHDPQVLAIKITLYRTSGDSPIVSALIKAAENGKQVAVLVELKARFDEENNILWARKLEKVGVHVVYGVPGLKTHTKTVLVVRQEAGQIRRYVHIGTGNYNPKTASLYEDLGLFSCREELGADLSELFNVLTGYARQRDYRKLLVAPVTMRDRTLQLIYREIEHARNGQPARIIAKMNAITDTQVIRALYEASQAGVDIDLIIRGMCCLRPGVPGVSDRIRVISIIGRFLEHSRIFYFGNNGDPEYYIGSADWRSRNLDRRVEAITPIEDPAIQLELKERLEIMLADNRQAWELQPDGTYRQRQPAPGEAERGTHSVLMARTLKDVQGSH.

Asn61 lines the ATP pocket. 2 residues coordinate Mg(2+): Arg417 and Arg447. His477 acts as the Phosphohistidine intermediate in catalysis. Positions 510, 606, and 634 each coordinate ATP. Positions 699-718 (DGTYRQRQPAPGEAERGTHS) are disordered.

The protein belongs to the polyphosphate kinase 1 (PPK1) family. The cofactor is Mg(2+). Post-translationally, an intermediate of this reaction is the autophosphorylated ppk in which a phosphate is covalently linked to a histidine residue through a N-P bond.

It catalyses the reaction [phosphate](n) + ATP = [phosphate](n+1) + ADP. Functionally, catalyzes the reversible transfer of the terminal phosphate of ATP to form a long-chain polyphosphate (polyP). The sequence is that of Polyphosphate kinase from Thermosynechococcus vestitus (strain NIES-2133 / IAM M-273 / BP-1).